The following is an 85-amino-acid chain: uncharacterized protein (85 aa).

Transmembrane regions (helical) follow at residues 20–42 (IYWF…TTFL) and 52–69 (IILR…KHYY).

The protein localises to the membrane. This is an uncharacterized protein from Saccharomyces cerevisiae (strain ATCC 204508 / S288c) (Baker's yeast).